The sequence spans 408 residues: Acetate kinase (408 aa).

Asn7 contributes to the Mg(2+) binding site. Lys14 lines the ATP pocket. Arg91 lines the substrate pocket. Asp148 acts as the Proton donor/acceptor in catalysis. ATP contacts are provided by residues 208-212, 283-285, and 331-335; these read HLGNG, DFR, and GIGEN. Position 384 (Glu384) interacts with Mg(2+).

The protein belongs to the acetokinase family. Homodimer. Requires Mg(2+) as cofactor. The cofactor is Mn(2+).

The protein resides in the cytoplasm. It carries out the reaction acetate + ATP = acetyl phosphate + ADP. It participates in metabolic intermediate biosynthesis; acetyl-CoA biosynthesis; acetyl-CoA from acetate: step 1/2. With respect to regulation, inhibited by diethylpyrocarbonate, hydroxylamine and phenylglyoxal. Catalyzes the formation of acetyl phosphate from acetate and ATP. Can also catalyze the reverse reaction. Can also phosphorylate propionate, but has very low activity toward butyrate. The protein is Acetate kinase of Methanosarcina thermophila.